A 1701-amino-acid polypeptide reads, in one-letter code: DDB1- and CUL4-associated factor homolog 1 (1701 aa).

Over residues 224 to 245 (HAEQSTSNGTSIPSIKITSVDG) the composition is skewed to polar residues. 3 disordered regions span residues 224-269 (HAEQ…RRTE), 883-906 (DRPA…GNNF), and 932-961 (RPSN…TPTL). The LisH domain occupies 851-883 (NQAELLQLIHDHLLKSKLDSVAAMLKSEAKLPD). A compositionally biased stretch (polar residues) spans 888-906 (RSINTPILNKPLPSSGNNF). WD repeat units lie at residues 1086-1125 (DHDE…DEGH), 1128-1169 (CHGS…QRVH), 1171-1210 (YRED…DTYL), and 1215-1252 (GLQY…HVFD). 2 short sequence motifs (DWD box) span residues 1237-1245 (LLWDVRKKN) and 1275-1282 (EVYDIRTF). 3 disordered regions span residues 1384–1559 (IGRL…DINL), 1566–1585 (EARV…PVDP), and 1641–1701 (LVRG…DDEA). Composition is skewed to acidic residues over residues 1390–1423 (NEDE…DEEI) and 1451–1461 (DDNDTLDDLDF). Residues 1468–1479 (IIRRQAQRRRQR) are compositionally biased toward basic residues. Acidic residues-rich tracts occupy residues 1494–1512 (EGSD…DPDF) and 1520–1543 (DLVD…DDDS). Basic and acidic residues predominate over residues 1567–1581 (ARVVENEGNNERPAR). Acidic residues predominate over residues 1667-1678 (DTDEYQSEEEEI).

The protein belongs to the VPRBP/DCAF1 family. In terms of assembly, component of the cul4-rbx1-ddb1-dcaf1 E3 ubiquitin-protein ligase complex.

The protein resides in the nucleus. Its pathway is protein modification; protein ubiquitination. Functionally, component of the cul4-rbx1-ddb1-dcaf1 E3 ubiquitin-protein ligase complex, dcaf1 may function as the substrate recognition module within this complex. This is DDB1- and CUL4-associated factor homolog 1 (dcaf-1) from Caenorhabditis elegans.